The chain runs to 791 residues: ATP-dependent 6-phosphofructokinase, platelet type (791 aa).

Met-1 carries the N-acetylmethionine modification. The interval 1 to 399 is N-terminal catalytic PFK domain 1; the sequence is MDNKVSASPR…NLNTYKRLAI (399 aa). Phosphoserine is present on Ser-6. Position 12 is a phosphoserine; by PKA (Ser-12). Residue Ser-21 is modified to Phosphoserine. ATP contacts are provided by residues Gly-34, 97 to 98, and 127 to 130; these read RS and GSGS. Ser-142 carries the phosphoserine modification. Substrate is bound by residues 173–175, Arg-210, 217–219, Glu-273, Arg-301, and 307–310; these read SID, MGR, and HVQR. The Proton acceptor role is filled by Asp-175. At Ser-386 the chain carries Phosphoserine. Lys-395 is subject to N6-acetyllysine. The interval 400-411 is interdomain linker; the sequence is KLPDDKIQKSNC. Residues 412-791 are C-terminal regulatory PFK domain 2; that stretch reads NVAVINVGAP…RGGPEEPAAI (380 aa). Arg-481 lines the beta-D-fructose 2,6-bisphosphate pocket. At Lys-486 the chain carries N6-acetyllysine. Residues 538-542, Arg-576, 583-585, and Glu-639 contribute to the beta-D-fructose 2,6-bisphosphate site; these read TVSNN and MGG. A glycan (O-linked (GlcNAc) serine) is linked at Ser-540. Tyr-651 carries the post-translational modification Phosphotyrosine. Beta-D-fructose 2,6-bisphosphate-binding positions include Arg-665 and 671–674; that span reads HMQQ. Position 688 is an N6-acetyllysine (Lys-688). A beta-D-fructose 2,6-bisphosphate-binding site is contributed by Arg-744.

Belongs to the phosphofructokinase type A (PFKA) family. ATP-dependent PFK group I subfamily. Eukaryotic two domain clade 'E' sub-subfamily. As to quaternary structure, homo- and heterotetramers. Phosphofructokinase (PFK) enzyme functions as a tetramer composed of different combinations of 3 types of subunits, called PFKM (M), PFKL (L) and PFKP (P). The composition of the PFK tetramer differs according to the tissue type it is present in. The kinetic and regulatory properties of the tetrameric enzyme are dependent on the subunit composition, hence can vary across tissues. Interacts with ATG4B; promoting phosphorylation of ATG4B. It depends on Mg(2+) as a cofactor. Post-translationally, glcNAcylation decreases enzyme activity. Phosphorylation at Ser-386 promotes interaction with ATG4B.

It localises to the cytoplasm. The catalysed reaction is beta-D-fructose 6-phosphate + ATP = beta-D-fructose 1,6-bisphosphate + ADP + H(+). It participates in carbohydrate degradation; glycolysis; D-glyceraldehyde 3-phosphate and glycerone phosphate from D-glucose: step 3/4. With respect to regulation, allosterically activated by ADP, AMP, or fructose 2,6-bisphosphate, and allosterically inhibited by ATP or citrate. Its function is as follows. Catalyzes the phosphorylation of D-fructose 6-phosphate to fructose 1,6-bisphosphate by ATP, the first committing step of glycolysis. This Oryctolagus cuniculus (Rabbit) protein is ATP-dependent 6-phosphofructokinase, platelet type (PFKP).